The sequence spans 857 residues: Potassium channel AKT1 (857 aa).

Residues 1-61 (MRGGALLCGQ…PYDHKYRIWE (61 aa)) are Cytoplasmic-facing. A helical membrane pass occupies residues 62-82 (AFLVVLVVYTAWVSPFEFGFL). At 83-90 (RKPRPPLS) the chain is on the extracellular side. The helical transmembrane segment at 91 to 111 (ITDNIVNAFFAIDIIMTFFVG) threads the bilayer. Over 112–134 (YLDKSTYLIVDDRKQIAFKYLRS) the chain is Cytoplasmic. Residues 135–155 (WFLLDLVSTIPSEAAMRISSQ) traverse the membrane as a helical segment. Residues 156 to 158 (SYG) lie on the Extracellular side of the membrane. The helical; Voltage-sensor transmembrane segment at 159–179 (LFNMLRLWRLRRVGALFARLE) threads the bilayer. At 180 to 193 (KDRNFNYFWVRCAK) the chain is on the cytoplasmic side. The helical transmembrane segment at 194–214 (LVCVTLFAVHCAACFYYLIAA) threads the bilayer. The Extracellular segment spans residues 215–241 (RNSNPAKTWIGANVANFLEESLWMRYV). Residues 242-261 (TSMYWSITTLTTVGYGDLHP) constitute an intramembrane region (pore-forming). The Extracellular segment spans residues 262–265 (VNTK). A helical transmembrane segment spans residues 266-286 (EMIFDIFYMLFNLGLTAYLIG). Residues 287 to 857 (NMTNLVVHGT…GDHLIFATDS (571 aa)) are Cytoplasmic-facing. 372–493 (LFRGVSNDLL…IMNNLLQHLK (122 aa)) serves as a coordination point for a nucleoside 3',5'-cyclic phosphate. ANK repeat units follow at residues 515-546 (KMDL…DPNE), 550-579 (NGRT…DPNC), 583-612 (EGSV…TIDA), 614-643 (DVGH…DVTR), 647-676 (TGTS…DVNK), and 680-709 (HGWT…ERRV). Positions 790–857 (RVTISCAEKD…GDHLIFATDS (68 aa)) constitute a KHA domain.

This sequence belongs to the potassium channel family. Plant (TC 1.A.1.4) subfamily. In terms of assembly, the potassium channel is probably composed of a homo- or heterotetrameric complex of pore-forming subunits. Possible heteromultimer with AKT2 or KAT3. Part of a K(+)-channel calcium-sensing kinase/phosphatase complex composed by a calcium sensor CBL (CBL1, CBL2, CBL3 or CBL9), a kinase CIPK (CIPK6, CIPK16 or CIPK23), a phosphatase PP2C (AIP1) and a K(+)-channel (AKT1). Interacts directly with AIP1, CBL10, CIPK6, CIPK16 and CIPK23. In terms of processing, phosphorylated by CIPK proteins CIPK6, CIPK16 and CIPK23. The activation by phosphorylation is induced by low K(+) conditions and stimulates K(+) uptake and relocation. Dephosphorylation by AIP1 repressed the transport activity. As to expression, preferentially expressed in the peripheral cell layers of root mature including root cortex and root hairs. Detected also, at a lower level, in the mesophyll of the leaves and at restricted sites corresponding to hydathodes and guard cells.

It localises to the cell membrane. Its function is as follows. Highly selective inward-rectifying potassium channel that mediate potassium uptake by plant roots in response to low K(+) conditions, by a calcium-, CBL-, and CIPK-dependent pathway. Positively regulated by phosphorylation by CIPK23. Negatively regulated by a kinase-independent regulatory mechanism involving a competing direct binding of CBL10. Involved in the stomatal regulation by monitoring the turgor pressure in guard cells. Assuming opened or closed conformations in response to the voltage difference across the membrane, the channel is activated by hyperpolarization. May interact with the cytoskeleton or with regulatory proteins. Is essential with POT5/HAK5 for high-affinity potassium uptake in roots during seedling establishment and postgermination growth under low potassium conditions. This is Potassium channel AKT1 (AKT1) from Arabidopsis thaliana (Mouse-ear cress).